The following is a 105-amino-acid chain: Flagellar transcriptional regulator FlhD (105 aa).

It belongs to the FlhD family. As to quaternary structure, homodimer; disulfide-linked. Forms a heterohexamer composed of two FlhC and four FlhD subunits. Each FlhC binds a FlhD dimer, forming a heterotrimer, and a hexamer assembles by dimerization of two heterotrimers.

The protein localises to the cytoplasm. Functionally, functions in complex with FlhC as a master transcriptional regulator that regulates transcription of several flagellar and non-flagellar operons by binding to their promoter region. Activates expression of class 2 flagellar genes, including fliA, which is a flagellum-specific sigma factor that turns on the class 3 genes. Also regulates genes whose products function in a variety of physiological pathways. This is Flagellar transcriptional regulator FlhD from Nitrosomonas eutropha (strain DSM 101675 / C91 / Nm57).